The chain runs to 838 residues: Probable inorganic carbon transporter subunit DabA (838 aa).

The Zn(2+) site is built by Cys-353, Asp-355, His-537, and Cys-552.

It belongs to the inorganic carbon transporter (TC 9.A.2) DabA family. As to quaternary structure, forms a complex with DabB. It depends on Zn(2+) as a cofactor.

Its subcellular location is the cell membrane. Its function is as follows. Part of an energy-coupled inorganic carbon pump. The chain is Probable inorganic carbon transporter subunit DabA from Chloroflexus aurantiacus (strain ATCC 29366 / DSM 635 / J-10-fl).